Reading from the N-terminus, the 401-residue chain is CCA-adding enzyme (401 aa).

Residues Gly32 and Arg35 each coordinate ATP. CTP is bound by residues Gly32 and Arg35. Positions 45 and 47 each coordinate Mg(2+). The ATP site is built by Arg116, Asp159, Arg162, Arg165, and Arg168. CTP-binding residues include Arg116, Asp159, Arg162, Arg165, and Arg168.

Belongs to the tRNA nucleotidyltransferase/poly(A) polymerase family. Bacterial CCA-adding enzyme type 3 subfamily. As to quaternary structure, homodimer. It depends on Mg(2+) as a cofactor.

The catalysed reaction is a tRNA precursor + 2 CTP + ATP = a tRNA with a 3' CCA end + 3 diphosphate. The enzyme catalyses a tRNA with a 3' CCA end + 2 CTP + ATP = a tRNA with a 3' CCACCA end + 3 diphosphate. Functionally, catalyzes the addition and repair of the essential 3'-terminal CCA sequence in tRNAs without using a nucleic acid template. Adds these three nucleotides in the order of C, C, and A to the tRNA nucleotide-73, using CTP and ATP as substrates and producing inorganic pyrophosphate. tRNA 3'-terminal CCA addition is required both for tRNA processing and repair. Also involved in tRNA surveillance by mediating tandem CCA addition to generate a CCACCA at the 3' terminus of unstable tRNAs. While stable tRNAs receive only 3'-terminal CCA, unstable tRNAs are marked with CCACCA and rapidly degraded. This is CCA-adding enzyme from Streptococcus mutans serotype c (strain ATCC 700610 / UA159).